The following is a 419-amino-acid chain: Putative actin-fragmin kinase DDB_G0279609 (419 aa).

Residues 73 to 94 (INNNNNSINNNNNNNNKNKNKN) are disordered.

Belongs to the protein kinase superfamily. AFK Ser/Thr protein kinase family.

This Dictyostelium discoideum (Social amoeba) protein is Putative actin-fragmin kinase DDB_G0279609.